We begin with the raw amino-acid sequence, 445 residues long: Exodeoxyribonuclease 7 large subunit (445 aa).

It belongs to the XseA family. In terms of assembly, heterooligomer composed of large and small subunits.

The protein resides in the cytoplasm. It catalyses the reaction Exonucleolytic cleavage in either 5'- to 3'- or 3'- to 5'-direction to yield nucleoside 5'-phosphates.. Its function is as follows. Bidirectionally degrades single-stranded DNA into large acid-insoluble oligonucleotides, which are then degraded further into small acid-soluble oligonucleotides. In Staphylococcus epidermidis (strain ATCC 12228 / FDA PCI 1200), this protein is Exodeoxyribonuclease 7 large subunit.